A 172-amino-acid chain; its full sequence is RNA silencing suppressor p19 (172 aa).

Positions 1–15 are enriched in basic and acidic residues; sequence MERAIQGNDAREQAY. The disordered stretch occupies residues 1-38; the sequence is MERAIQGNDAREQAYGERWNGGPGGSTSPFQLPDESPS.

It belongs to the tombusvirus protein p19 family. As to quaternary structure, homodimer.

Functionally, viral suppressor of RNA silencing which binds specifically to silencing RNAs (siRNAs). Acts as a molecular caliper to specifically select siRNAs based on the length of the duplex region of the RNA. The chain is RNA silencing suppressor p19 from Tomato bushy stunt virus (strain A23) (TBSV).